The following is a 127-amino-acid chain: Aspartate 1-decarboxylase (127 aa).

The active-site Schiff-base intermediate with substrate; via pyruvic acid is Ser25. Position 25 is a pyruvic acid (Ser) (Ser25). A substrate-binding site is contributed by Thr57. Tyr58 serves as the catalytic Proton donor. Position 73 to 75 (73 to 75) interacts with substrate; that stretch reads GAA.

It belongs to the PanD family. Heterooctamer of four alpha and four beta subunits. The cofactor is pyruvate. Post-translationally, is synthesized initially as an inactive proenzyme, which is activated by self-cleavage at a specific serine bond to produce a beta-subunit with a hydroxyl group at its C-terminus and an alpha-subunit with a pyruvoyl group at its N-terminus.

The protein localises to the cytoplasm. The enzyme catalyses L-aspartate + H(+) = beta-alanine + CO2. It functions in the pathway cofactor biosynthesis; (R)-pantothenate biosynthesis; beta-alanine from L-aspartate: step 1/1. Its function is as follows. Catalyzes the pyruvoyl-dependent decarboxylation of aspartate to produce beta-alanine. The polypeptide is Aspartate 1-decarboxylase (Bacillus licheniformis (strain ATCC 14580 / DSM 13 / JCM 2505 / CCUG 7422 / NBRC 12200 / NCIMB 9375 / NCTC 10341 / NRRL NRS-1264 / Gibson 46)).